Consider the following 352-residue polypeptide: Nicotinate-nucleotide--dimethylbenzimidazole phosphoribosyltransferase (352 aa).

Catalysis depends on E316, which acts as the Proton acceptor.

Belongs to the CobT family.

It catalyses the reaction 5,6-dimethylbenzimidazole + nicotinate beta-D-ribonucleotide = alpha-ribazole 5'-phosphate + nicotinate + H(+). It functions in the pathway nucleoside biosynthesis; alpha-ribazole biosynthesis; alpha-ribazole from 5,6-dimethylbenzimidazole: step 1/2. In terms of biological role, catalyzes the synthesis of alpha-ribazole-5'-phosphate from nicotinate mononucleotide (NAMN) and 5,6-dimethylbenzimidazole (DMB). In Clostridium acetobutylicum (strain ATCC 824 / DSM 792 / JCM 1419 / IAM 19013 / LMG 5710 / NBRC 13948 / NRRL B-527 / VKM B-1787 / 2291 / W), this protein is Nicotinate-nucleotide--dimethylbenzimidazole phosphoribosyltransferase.